We begin with the raw amino-acid sequence, 153 residues long: 6,7-dimethyl-8-ribityllumazine synthase (153 aa).

5-amino-6-(D-ribitylamino)uracil is bound by residues F22, 56 to 58 (AFE), and 80 to 82 (TVI). Residue 85 to 86 (ST) participates in (2S)-2-hydroxy-3-oxobutyl phosphate binding. H88 acts as the Proton donor in catalysis. A 5-amino-6-(D-ribitylamino)uracil-binding site is contributed by F113. R127 serves as a coordination point for (2S)-2-hydroxy-3-oxobutyl phosphate.

The protein belongs to the DMRL synthase family. Forms an icosahedral capsid composed of 60 subunits, arranged as a dodecamer of pentamers.

The enzyme catalyses (2S)-2-hydroxy-3-oxobutyl phosphate + 5-amino-6-(D-ribitylamino)uracil = 6,7-dimethyl-8-(1-D-ribityl)lumazine + phosphate + 2 H2O + H(+). It functions in the pathway cofactor biosynthesis; riboflavin biosynthesis; riboflavin from 2-hydroxy-3-oxobutyl phosphate and 5-amino-6-(D-ribitylamino)uracil: step 1/2. Functionally, catalyzes the formation of 6,7-dimethyl-8-ribityllumazine by condensation of 5-amino-6-(D-ribitylamino)uracil with 3,4-dihydroxy-2-butanone 4-phosphate. This is the penultimate step in the biosynthesis of riboflavin. The chain is 6,7-dimethyl-8-ribityllumazine synthase from Actinobacillus pleuropneumoniae (Haemophilus pleuropneumoniae).